A 110-amino-acid chain; its full sequence is Holo-[acyl-carrier-protein] synthase (110 aa).

Residues Asp8 and Glu54 each coordinate Mg(2+).

It belongs to the P-Pant transferase superfamily. AcpS family. It depends on Mg(2+) as a cofactor.

It is found in the cytoplasm. The enzyme catalyses apo-[ACP] + CoA = holo-[ACP] + adenosine 3',5'-bisphosphate + H(+). Functionally, transfers the 4'-phosphopantetheine moiety from coenzyme A to a Ser of acyl-carrier-protein. This chain is Holo-[acyl-carrier-protein] synthase, found in Mycoplasma capricolum subsp. capricolum (strain California kid / ATCC 27343 / NCTC 10154).